Here is a 333-residue protein sequence, read N- to C-terminus: MRNTRYGFLVLLSSLLMLTGCSRRDILDDYPVSGVDIKLDWDGVTDQLPEGVRVIFYPKNGDGRKVDKYLSVRGGEMKVPPGRYSVVVYNYNTESIRIRGEESYETIEAYTGNCNGLGIEGTEKMVWSPDSLYVLNIDELKIEKSEEVLRLDWKLESVVKKYSFAVEAKGLEYVATVVGSIDGLSDCYCIGKGRGVCSSQPIYFEVKKGDNKVTAFFTAFKQVKEMTMPTRMSTSERETSSEKGAIILILKFIKTDNTVQEATIDVTEIIGTLENAGTGEDGKPTPPPEIELPPDDKIEVDKPETPPNPDGGGGMGGNVDGWGPEDNVELPVN.

The N-terminal stretch at 1 to 20 is a signal peptide; it reads MRNTRYGFLVLLSSLLMLTG. Cysteine 21 carries the N-palmitoyl cysteine lipid modification. Residue cysteine 21 is the site of S-diacylglycerol cysteine attachment. A disordered region spans residues 274–333; the sequence is ENAGTGEDGKPTPPPEIELPPDDKIEVDKPETPPNPDGGGGMGGNVDGWGPEDNVELPVN. The segment covering 294 to 304 has biased composition (basic and acidic residues); that stretch reads PDDKIEVDKPE. A compositionally biased stretch (gly residues) spans 310–320; sequence DGGGGMGGNVD.

It belongs to the bacteroidetes fimbrillin superfamily. FimB/Mfa2 family.

It is found in the cell outer membrane. Its function is as follows. Putative fimbrium anchoring subunit. The protein is Putative fimbrium anchoring subunit Fim4B of Bacteroides ovatus (strain ATCC 8483 / DSM 1896 / JCM 5824 / BCRC 10623 / CCUG 4943 / NCTC 11153).